The following is a 57-amino-acid chain: uncharacterized protein (57 aa).

A helical transmembrane segment spans residues 34-54 (AALLDAAALVVIPGLLTAAAV).

Its subcellular location is the membrane. This is an uncharacterized protein from Dictyostelium discoideum (Social amoeba).